We begin with the raw amino-acid sequence, 95 residues long: Aspartyl/glutamyl-tRNA(Asn/Gln) amidotransferase subunit C (95 aa).

Belongs to the GatC family. Heterotrimer of A, B and C subunits.

The enzyme catalyses L-glutamyl-tRNA(Gln) + L-glutamine + ATP + H2O = L-glutaminyl-tRNA(Gln) + L-glutamate + ADP + phosphate + H(+). It carries out the reaction L-aspartyl-tRNA(Asn) + L-glutamine + ATP + H2O = L-asparaginyl-tRNA(Asn) + L-glutamate + ADP + phosphate + 2 H(+). Allows the formation of correctly charged Asn-tRNA(Asn) or Gln-tRNA(Gln) through the transamidation of misacylated Asp-tRNA(Asn) or Glu-tRNA(Gln) in organisms which lack either or both of asparaginyl-tRNA or glutaminyl-tRNA synthetases. The reaction takes place in the presence of glutamine and ATP through an activated phospho-Asp-tRNA(Asn) or phospho-Glu-tRNA(Gln). This is Aspartyl/glutamyl-tRNA(Asn/Gln) amidotransferase subunit C from Rhizorhabdus wittichii (strain DSM 6014 / CCUG 31198 / JCM 15750 / NBRC 105917 / EY 4224 / RW1) (Sphingomonas wittichii).